A 196-amino-acid polypeptide reads, in one-letter code: CRISPR-associated exonuclease Cas4 (196 aa).

A [4Fe-4S] cluster-binding site is contributed by cysteine 23. The Mn(2+) site is built by histidine 50, aspartate 90, and glutamate 103. [4Fe-4S] cluster contacts are provided by cysteine 184, cysteine 187, and cysteine 193.

It belongs to the CRISPR-associated exonuclease Cas4 family. Mg(2+) is required as a cofactor. It depends on [4Fe-4S] cluster as a cofactor.

It carries out the reaction exonucleolytic cleavage in the 5'- to 3'-direction to yield nucleoside 3'-phosphates.. Functionally, CRISPR (clustered regularly interspaced short palindromic repeat) is an adaptive immune system that provides protection against mobile genetic elements (viruses, transposable elements and conjugative plasmids). CRISPR clusters contain sequences complementary to antecedent mobile elements and target invading nucleic acids. CRISPR clusters are transcribed and processed into CRISPR RNA (crRNA). This may be a 5' to 3' ssDNA exonuclease. The chain is CRISPR-associated exonuclease Cas4 from Francisella tularensis subsp. novicida (strain U112).